The following is a 132-amino-acid chain: uncharacterized protein (132 aa).

This is an uncharacterized protein from Homo sapiens (Human).